The primary structure comprises 401 residues: Alternative oxidase, mitochondrial (401 aa).

Positions 53–81 (KRASLSLQPSVREAEKSQGPVVGSEGRGV) are disordered. The chain crosses the membrane as a helical span at residues 184 to 204 (LFRIILLESIAGVPGMVGGTL). 3 residues coordinate Fe cation: Glu-191, Glu-230, and His-233. A helical membrane pass occupies residues 249–269 (ALVLAAQGVFYNAFFLTYLIS). Residues Glu-281, Glu-282, Glu-335, and His-338 each contribute to the Fe cation site.

This sequence belongs to the alternative oxidase family. It depends on Fe cation as a cofactor.

It is found in the mitochondrion inner membrane. Its function is as follows. Catalyzes cyanide-resistant oxygen consumption. May increase respiration when the cytochrome respiratory pathway is restricted, or in response to low temperatures. This is Alternative oxidase, mitochondrial (AOX1) from Cryptococcus neoformans var. grubii serotype A (strain H99 / ATCC 208821 / CBS 10515 / FGSC 9487) (Filobasidiella neoformans var. grubii).